Here is a 303-residue protein sequence, read N- to C-terminus: MDEKVELILVPCHSIWKSSSHPSDNSVNLGQLPEYWHLAPFQYEGNDHLAFIKHGLTAIKLLLQRFDTATVIFSGSQTKKEAGAISEAQSYYFLFEKLIRYVMSNDNIDVPNFDNELRLLLKEVKNLLSSQNVNVDELFYGGSITTEEFSLDSFDNLIYSIYRFEEVNKKFPQKITIIGFAFKMPRFISCHAKAIDYPQSNITYIGIDPKPANYNQTQLSKYYDDLVQMEDKNALSLFSSDWYATKDRLLTKKRSRNPFNRTAPYAQNIFCKENGKRIEGIEDDEEYFETKIKCKMPWSSPRQ.

Its subcellular location is the cytoplasm. This is an uncharacterized protein from Saccharomyces cerevisiae (strain ATCC 204508 / S288c) (Baker's yeast).